We begin with the raw amino-acid sequence, 100 residues long: MISEERLLKILLSPHVSEKTSISMEKFNTVVLKVLNNATKYEIKYAVKKIFDVDVDSIKTLKVKGKKKRQSNRIIQRSHWKKAYIKVKKGCNLDFIGNTE.

The protein belongs to the universal ribosomal protein uL23 family. In terms of assembly, part of the 50S ribosomal subunit. Contacts protein L29, and trigger factor when it is bound to the ribosome.

In terms of biological role, one of the early assembly proteins it binds 23S rRNA. One of the proteins that surrounds the polypeptide exit tunnel on the outside of the ribosome. Forms the main docking site for trigger factor binding to the ribosome. This is Large ribosomal subunit protein uL23 from Buchnera aphidicola subsp. Acyrthosiphon pisum (strain 5A).